A 161-amino-acid polypeptide reads, in one-letter code: 18.1 kDa class I heat shock protein (161 aa).

Residues 47–161 (ETAAFAGARI…PDVKSIQVTG (115 aa)) form the sHSP domain.

This sequence belongs to the small heat shock protein (HSP20) family. As to quaternary structure, may form oligomeric structures.

The protein localises to the cytoplasm. This Oryza sativa subsp. japonica (Rice) protein is 18.1 kDa class I heat shock protein (HSP18.1).